The following is a 348-amino-acid chain: Phosphate acyltransferase (348 aa).

This sequence belongs to the PlsX family. Homodimer. Probably interacts with PlsY.

It localises to the cytoplasm. The enzyme catalyses a fatty acyl-[ACP] + phosphate = an acyl phosphate + holo-[ACP]. Its pathway is lipid metabolism; phospholipid metabolism. In terms of biological role, catalyzes the reversible formation of acyl-phosphate (acyl-PO(4)) from acyl-[acyl-carrier-protein] (acyl-ACP). This enzyme utilizes acyl-ACP as fatty acyl donor, but not acyl-CoA. This chain is Phosphate acyltransferase, found in Rhizorhabdus wittichii (strain DSM 6014 / CCUG 31198 / JCM 15750 / NBRC 105917 / EY 4224 / RW1) (Sphingomonas wittichii).